We begin with the raw amino-acid sequence, 118 residues long: NADH-ubiquinone oxidoreductase chain 3 (118 aa).

Helical transmembrane passes span 9–29 (IYLVISLLVSLILLGVPFLFA), 62–82 (LVSILFIIFDLEVTFFFPWAV), and 87–107 (IDLFGFWSMMAFLLILTIGFL).

It belongs to the complex I subunit 3 family.

It is found in the mitochondrion membrane. The catalysed reaction is a ubiquinone + NADH + 5 H(+)(in) = a ubiquinol + NAD(+) + 4 H(+)(out). Functionally, core subunit of the mitochondrial membrane respiratory chain NADH dehydrogenase (Complex I) that is believed to belong to the minimal assembly required for catalysis. Complex I functions in the transfer of electrons from NADH to the respiratory chain. The immediate electron acceptor for the enzyme is believed to be ubiquinone. In Triticum aestivum (Wheat), this protein is NADH-ubiquinone oxidoreductase chain 3 (ND3).